The sequence spans 203 residues: Proline-rich protein 1 (203 aa).

Residues 1–20 (MMKLGLYLTLLFLSVWTVSG) form the signal peptide.

Component of the acid-insoluble and acid-soluble organic matrix of calcified layers of the shell (at protein level).

It is found in the secreted. The sequence is that of Proline-rich protein 1 from Lottia gigantea (Giant owl limpet).